Consider the following 128-residue polypeptide: 14 kDa zinc-binding protein (128 aa).

Positions 18-128 (IFDKIIKKEI…GGRQMNWPPG (111 aa)) constitute an HIT domain. Residues 112–116 (HIHVH) carry the Histidine triad motif motif.

In terms of assembly, homodimer.

This is 14 kDa zinc-binding protein (ZBP14) from Zea mays (Maize).